Here is a 138-residue protein sequence, read N- to C-terminus: ATP synthase epsilon chain (138 aa).

The protein belongs to the ATPase epsilon chain family. As to quaternary structure, F-type ATPases have 2 components, CF(1) - the catalytic core - and CF(0) - the membrane proton channel. CF(1) has five subunits: alpha(3), beta(3), gamma(1), delta(1), epsilon(1). CF(0) has three main subunits: a, b and c.

It is found in the cell membrane. In terms of biological role, produces ATP from ADP in the presence of a proton gradient across the membrane. This chain is ATP synthase epsilon chain, found in Caldanaerobacter subterraneus subsp. tengcongensis (strain DSM 15242 / JCM 11007 / NBRC 100824 / MB4) (Thermoanaerobacter tengcongensis).